A 223-amino-acid polypeptide reads, in one-letter code: Uracil-DNA glycosylase (223 aa).

Aspartate 67 serves as the catalytic Proton acceptor.

It belongs to the uracil-DNA glycosylase (UDG) superfamily. UNG family.

The protein localises to the cytoplasm. It carries out the reaction Hydrolyzes single-stranded DNA or mismatched double-stranded DNA and polynucleotides, releasing free uracil.. Excises uracil residues from the DNA which can arise as a result of misincorporation of dUMP residues by DNA polymerase or due to deamination of cytosine. The protein is Uracil-DNA glycosylase of Borreliella burgdorferi (strain ZS7) (Borrelia burgdorferi).